A 617-amino-acid chain; its full sequence is Phosphomethylpyrimidine synthase (617 aa).

Residues Asn230, Met259, Tyr288, His324, 344–346 (SRG), 385–388 (DGLR), and Glu424 contribute to the substrate site. Position 428 (His428) interacts with Zn(2+). Tyr451 serves as a coordination point for substrate. His492 is a binding site for Zn(2+). [4Fe-4S] cluster is bound by residues Cys572, Cys575, and Cys580.

It belongs to the ThiC family. In terms of assembly, homodimer. It depends on [4Fe-4S] cluster as a cofactor.

The enzyme catalyses 5-amino-1-(5-phospho-beta-D-ribosyl)imidazole + S-adenosyl-L-methionine = 4-amino-2-methyl-5-(phosphooxymethyl)pyrimidine + CO + 5'-deoxyadenosine + formate + L-methionine + 3 H(+). It participates in cofactor biosynthesis; thiamine diphosphate biosynthesis. Its function is as follows. Catalyzes the synthesis of the hydroxymethylpyrimidine phosphate (HMP-P) moiety of thiamine from aminoimidazole ribotide (AIR) in a radical S-adenosyl-L-methionine (SAM)-dependent reaction. The polypeptide is Phosphomethylpyrimidine synthase (Paracidovorax citrulli (strain AAC00-1) (Acidovorax citrulli)).